The primary structure comprises 633 residues: tRNA uridine 5-carboxymethylaminomethyl modification enzyme MnmG (633 aa).

FAD is bound by residues G15–G20, I127, and S182. NAD(+) is bound at residue G276 to F290. Q373 is an FAD binding site.

This sequence belongs to the MnmG family. As to quaternary structure, homodimer. Heterotetramer of two MnmE and two MnmG subunits. FAD is required as a cofactor.

The protein resides in the cytoplasm. In terms of biological role, NAD-binding protein involved in the addition of a carboxymethylaminomethyl (cmnm) group at the wobble position (U34) of certain tRNAs, forming tRNA-cmnm(5)s(2)U34. The chain is tRNA uridine 5-carboxymethylaminomethyl modification enzyme MnmG from Streptococcus agalactiae serotype Ia (strain ATCC 27591 / A909 / CDC SS700).